The primary structure comprises 302 residues: Sulfate adenylyltransferase subunit 2 (302 aa).

Positions Arg280–Phe302 are disordered.

The protein belongs to the PAPS reductase family. CysD subfamily. Heterodimer composed of CysD, the smaller subunit, and CysN.

It carries out the reaction sulfate + ATP + H(+) = adenosine 5'-phosphosulfate + diphosphate. It functions in the pathway sulfur metabolism; hydrogen sulfide biosynthesis; sulfite from sulfate: step 1/3. With CysN forms the ATP sulfurylase (ATPS) that catalyzes the adenylation of sulfate producing adenosine 5'-phosphosulfate (APS) and diphosphate, the first enzymatic step in sulfur assimilation pathway. APS synthesis involves the formation of a high-energy phosphoric-sulfuric acid anhydride bond driven by GTP hydrolysis by CysN coupled to ATP hydrolysis by CysD. This is Sulfate adenylyltransferase subunit 2 from Hahella chejuensis (strain KCTC 2396).